The sequence spans 473 residues: Arginine biosynthesis bifunctional protein ArgJ, mitochondrial (473 aa).

The substrate site is built by Thr-201, Lys-230, Thr-241, Glu-328, Asn-468, and Thr-473. Residue Thr-241 is the Nucleophile of the active site.

Belongs to the ArgJ family. In terms of assembly, heterodimer of an alpha and a beta chain. In terms of processing, the alpha and beta chains are autoproteolytically processed from a single precursor protein within the mitochondrion.

It is found in the mitochondrion matrix. It carries out the reaction N(2)-acetyl-L-ornithine + L-glutamate = N-acetyl-L-glutamate + L-ornithine. The catalysed reaction is L-glutamate + acetyl-CoA = N-acetyl-L-glutamate + CoA + H(+). The protein operates within amino-acid biosynthesis; L-arginine biosynthesis; L-ornithine and N-acetyl-L-glutamate from L-glutamate and N(2)-acetyl-L-ornithine (cyclic): step 1/1. Its pathway is amino-acid biosynthesis; L-arginine biosynthesis; N(2)-acetyl-L-ornithine from L-glutamate: step 1/4. Functionally, catalyzes two activities which are involved in the cyclic version of arginine biosynthesis: the synthesis of acetylglutamate from glutamate and acetyl-CoA, and of ornithine by transacetylation between acetylornithine and glutamate. This chain is Arginine biosynthesis bifunctional protein ArgJ, mitochondrial, found in Paracoccidioides lutzii (strain ATCC MYA-826 / Pb01) (Paracoccidioides brasiliensis).